The primary structure comprises 95 residues: Probable FAD-linked sulfhydryl oxidase OPG072 (95 aa).

Residues 1–8 are Intravirion-facing; it reads MNPKHWGR. Positions 1–95 constitute an ERV/ALR sulfhydryl oxidase domain; it reads MNPKHWGRAA…AIDVSKVKPL (95 aa). The helical transmembrane segment at 9 to 25 threads the bilayer; it reads AAWTIIFIVLSQAGLDG. Residues 26–95 are Virion surface-facing; that stretch reads NIEACKRKLY…AIDVSKVKPL (70 aa). Cys-43 and Cys-46 are disulfide-bonded.

The protein belongs to the orthopoxvirus OPG072 family. As to quaternary structure, interacts with OPG128; this interaction involves formation of a transient disulfide-bonded intermediate, allowing disulfide bond transfer. The cofactor is FAD.

The protein localises to the virion membrane. Its subcellular location is the host cytoplasm. It carries out the reaction 2 R'C(R)SH + O2 = R'C(R)S-S(R)CR' + H2O2. Functionally, FAD-dependent sulfhydryl oxidase that catalyzes disulfide bond formation. The complete pathway for formation of disulfide bonds in intracellular virion membrane proteins sequentially involves thiol-disulfide transfer between OPG072, OPG128 and OPG088. This chain is Probable FAD-linked sulfhydryl oxidase OPG072 (OPG072), found in Variola virus (isolate Human/India/Ind3/1967) (VARV).